The sequence spans 619 residues: Kininogen-2 (619 aa).

Residues 1 to 18 (MKLITILFLCSRLLPSLT) form the signal peptide. At Gln19 the chain carries Pyrrolidone carboxylic acid. One can recognise a Cystatin kininogen-type 1 domain in the interval 27 to 131 (CNDQDVFKAV…IQTCLITPAE (105 aa)). Cystine bridges form between Cys27–Cys589, Cys82–Cys93, Cys106–Cys125, Cys141–Cys144, Cys205–Cys217, Cys228–Cys247, Cys261–Cys264, Cys325–Cys337, and Cys348–Cys367. Asn87 carries N-linked (GlcNAc...) asparagine glycosylation. Thr136 carries an O-linked (GalNAc...) threonine; partial glycan. Positions 150 to 253 (TKSPDLEPVL…SQKCDLYPGE (104 aa)) constitute a Cystatin kininogen-type 2 domain. Residues Asn168 and Asn169 are each glycosylated (N-linked (GlcNAc...) asparagine). N-linked (GlcNAc...) asparagine; partial glycosylation occurs at Asn197. N-linked (GlcNAc...) asparagine glycosylation occurs at Asn204. Positions 270-373 (VDSPDLEEAL…TVNCQPLGQT (104 aa)) constitute a Cystatin kininogen-type 3 domain. An N-linked (GlcNAc...) asparagine glycan is attached at Asn280. Pro380 carries the post-translational modification 4-hydroxyproline. Residues 394–495 (EGSTTVSLPH…GKNNGKHYDW (102 aa)) are disordered. O-linked (GalNAc...) serine glycosylation is present at Ser396. Residues Thr397 and Thr398 are each glycosylated (O-linked (GalNAc...) threonine). O-linked (GalNAc...) serine glycosylation is found at Ser400 and Ser404. Residues 442 to 490 (GHKHKHDQGHGHHRSHGLGHGHQKQHGLGHGHKHGHGHGKHKNKGKNNG) are compositionally biased toward basic residues. O-linked (GalNAc...) serine glycosylation is present at Ser510. 6 O-linked (GalNAc...) threonine glycosylation sites follow: Thr518, Thr522, Thr534, Thr546, Thr551, and Thr568.

Post-translationally, bradykinin is released from kininogen by plasma kallikrein. As to expression, plasma.

Its subcellular location is the secreted. It is found in the extracellular space. (1) Kininogens are inhibitors of thiol proteases; (2) HMW-kininogen plays an important role in blood coagulation by helping to position optimally prekallikrein and factor XI next to factor XII; (3) HMW-kininogen inhibits the thrombin- and plasmin-induced aggregation of thrombocytes; (4) the active peptide bradykinin that is released from HMW-kininogen shows a variety of physiological effects: (4A) influence in smooth muscle contraction, (4B) induction of hypotension, (4C) natriuresis and diuresis, (4D) decrease in blood glucose level, (4E) it is a mediator of inflammation and causes (4E1) increase in vascular permeability, (4E2) stimulation of nociceptors (4E3) release of other mediators of inflammation (e.g. prostaglandins), (4F) it has a cardioprotective effect (directly via bradykinin action, indirectly via endothelium-derived relaxing factor action); (5) LMW-kininogen inhibits the aggregation of thrombocytes; (6) LMW-kininogen is in contrast to HMW-kininogen not involved in blood clotting. The chain is Kininogen-2 (KNG2) from Bos taurus (Bovine).